The primary structure comprises 461 residues: L-seryl-tRNA(Sec) selenium transferase (461 aa).

N6-(pyridoxal phosphate)lysine is present on Lys294.

Belongs to the SelA family. It depends on pyridoxal 5'-phosphate as a cofactor.

Its subcellular location is the cytoplasm. It catalyses the reaction L-seryl-tRNA(Sec) + selenophosphate + H(+) = L-selenocysteinyl-tRNA(Sec) + phosphate. The protein operates within aminoacyl-tRNA biosynthesis; selenocysteinyl-tRNA(Sec) biosynthesis; selenocysteinyl-tRNA(Sec) from L-seryl-tRNA(Sec) (bacterial route): step 1/1. Its function is as follows. Converts seryl-tRNA(Sec) to selenocysteinyl-tRNA(Sec) required for selenoprotein biosynthesis. This is L-seryl-tRNA(Sec) selenium transferase from Haemophilus influenzae (strain 86-028NP).